The following is a 301-amino-acid chain: LHMIHLHWYQYPPMNPMMYPLLLIFMLFTGILCLAGNFVTIWVFMNTKSLRTPANLLVVNLAMSDFLMMFTMFPPMMVTCYYHTWTLGPTFCQVYAFLGNLCGCASIWTMVFITFDRYNVIVKGVAGEPLSTKKASLWILSVWVLSTAWCIAPFFGWNHYVPEGNLTGCGTDYLSEDILSRSYLYIYSTWVYFLPLAITIYCYVFIIKAVAAHEKGMRDQAKKMGIKSLRNEEAQKTSAECRLAKNAMTTVALWFIAWTPCLLINWVGMFARSYLSPVYTIWGYVFAKANAVYNPIVYAIS.

Residues 1–18 (LHMIHLHWYQYPPMNPMM) are Extracellular-facing. Residues 19–43 (YPLLLIFMLFTGILCLAGNFVTIWV) traverse the membrane as a helical segment. Topologically, residues 44-55 (FMNTKSLRTPAN) are cytoplasmic. Residues 56-78 (LLVVNLAMSDFLMMFTMFPPMMV) form a helical membrane-spanning segment. Residues 79–92 (TCYYHTWTLGPTFC) lie on the Extracellular side of the membrane. Cys92 and Cys169 are joined by a disulfide. The chain crosses the membrane as a helical span at residues 93–115 (QVYAFLGNLCGCASIWTMVFITF). The 'Ionic lock' involved in activated form stabilization signature appears at 116-118 (DRY). The Cytoplasmic segment spans residues 116–134 (DRYNVIVKGVAGEPLSTKK). The chain crosses the membrane as a helical span at residues 135 to 155 (ASLWILSVWVLSTAWCIAPFF). At 156–182 (GWNHYVPEGNLTGCGTDYLSEDILSRS) the chain is on the extracellular side. Asn165 is a glycosylation site (N-linked (GlcNAc...) asparagine). A helical transmembrane segment spans residues 183–204 (YLYIYSTWVYFLPLAITIYCYV). At 205 to 245 (FIIKAVAAHEKGMRDQAKKMGIKSLRNEEAQKTSAECRLAK) the chain is on the cytoplasmic side. The chain crosses the membrane as a helical span at residues 246 to 267 (NAMTTVALWFIAWTPCLLINWV). Topologically, residues 268-278 (GMFARSYLSPV) are extracellular. The helical transmembrane segment at 279 to 300 (YTIWGYVFAKANAVYNPIVYAI) threads the bilayer. Lys288 carries the N6-(retinylidene)lysine modification.

It belongs to the G-protein coupled receptor 1 family. Opsin subfamily. Homodimer. Interacts with GNAQ. Contains one covalently linked retinal chromophore.

Its subcellular location is the cell projection. The protein resides in the rhabdomere membrane. In terms of biological role, photoreceptor required for image-forming vision at low light intensity. Can use both retinal and 3-dehydroretinal as visual pigment. Light-induced isomerization of 11-cis to all-trans retinal triggers a conformational change that activates signaling via G-proteins. Signaling via GNAQ probably mediates the activation of phospholipase C. In Cambarus hubrichti (Salem cave crayfish), this protein is Rhodopsin (RHO).